The chain runs to 115 residues: Ribonuclease P protein component (115 aa).

The protein belongs to the RnpA family. As to quaternary structure, consists of a catalytic RNA component (M1 or rnpB) and a protein subunit.

It carries out the reaction Endonucleolytic cleavage of RNA, removing 5'-extranucleotides from tRNA precursor.. Functionally, RNaseP catalyzes the removal of the 5'-leader sequence from pre-tRNA to produce the mature 5'-terminus. It can also cleave other RNA substrates such as 4.5S RNA. The protein component plays an auxiliary but essential role in vivo by binding to the 5'-leader sequence and broadening the substrate specificity of the ribozyme. The sequence is that of Ribonuclease P protein component from Buchnera aphidicola subsp. Acyrthosiphon pisum (strain APS) (Acyrthosiphon pisum symbiotic bacterium).